The sequence spans 287 residues: 4,4'-diapophytoene synthase (287 aa).

(2E,6E)-farnesyl diphosphate contacts are provided by residues 18-21 (HSKS), Tyr-41, and Arg-45. Mg(2+) is bound by residues Asp-48 and Asp-52. Gln-165 is a (2E,6E)-farnesyl diphosphate binding site. Asn-168 contributes to the Mg(2+) binding site. Residue Arg-171 coordinates (2E,6E)-farnesyl diphosphate. Asp-172 contributes to the Mg(2+) binding site. Position 248 (Tyr-248) interacts with (2E,6E)-farnesyl diphosphate.

Belongs to the phytoene/squalene synthase family. CrtM subfamily. Mg(2+) is required as a cofactor.

It catalyses the reaction 2 (2E,6E)-farnesyl diphosphate = 15-cis-4,4'-diapophytoene + 2 diphosphate. It participates in carotenoid biosynthesis; staphyloxanthin biosynthesis; staphyloxanthin from farnesyl diphosphate: step 1/5. Involved in the biosynthesis of the yellow-orange carotenoid staphyloxanthin, which plays a role in the virulence via its protective function against oxidative stress. Catalyzes the head-to-head condensation of two molecules of farnesyl diphosphate (FPP) into the colorless C(30) carotenoid 4,4'-diapophytoene (dehydrosqualene). This Staphylococcus aureus (strain NCTC 8325 / PS 47) protein is 4,4'-diapophytoene synthase.